The sequence spans 442 residues: MSGLAYLDLPAARLARGEVALPGSKSISNRVLLLAALAEGSTEITGLLDSDDTRVMLAALRQLGVSVGEVADGCVTIEGVARFPIEQAELFLGNAGTAFRPLTAALALMGGDYRLSGVPRMHERPIGDLVDALRQFGAGIEYLGQAGYPPLRIGGGSIRVDGPVRVEGSVSSQFLTALLMAAPVLARRSGQDITIEVVGELISKPYIEITLNLMARFGVSVRRDGWRAFTIARDAAYRGPGRMAIEGDASTASYFLALGAIGGGPVRVTGVGEDSIQGDVAFAATLAAMGADVRYGPGWIETRGVRVAEGGRLKAFDADFNLIPDAAMTAATLALYADGPCRLRNIGSWRVKETDRIHAMHTELEKLGAGVQSGADWLEVAPPAPGGWRDAHIGTWDDHRMAMCFSLAAFGPAAVRILDPGCVSKTFPDYFDVYAGLLAARD.

Positions 25, 26, and 30 each coordinate 3-phosphoshikimate. Residue lysine 25 participates in phosphoenolpyruvate binding. Phosphoenolpyruvate-binding residues include glycine 96 and arginine 124. 6 residues coordinate 3-phosphoshikimate: serine 171, serine 172, glutamine 173, serine 203, aspartate 325, and lysine 352. Glutamine 173 provides a ligand contact to phosphoenolpyruvate. Aspartate 325 acts as the Proton acceptor in catalysis. The phosphoenolpyruvate site is built by arginine 356, arginine 400, and lysine 425.

It belongs to the EPSP synthase family. In terms of assembly, monomer.

It localises to the cytoplasm. It catalyses the reaction 3-phosphoshikimate + phosphoenolpyruvate = 5-O-(1-carboxyvinyl)-3-phosphoshikimate + phosphate. It functions in the pathway metabolic intermediate biosynthesis; chorismate biosynthesis; chorismate from D-erythrose 4-phosphate and phosphoenolpyruvate: step 6/7. Its function is as follows. Catalyzes the transfer of the enolpyruvyl moiety of phosphoenolpyruvate (PEP) to the 5-hydroxyl of shikimate-3-phosphate (S3P) to produce enolpyruvyl shikimate-3-phosphate and inorganic phosphate. The polypeptide is 3-phosphoshikimate 1-carboxyvinyltransferase (Bordetella parapertussis (strain 12822 / ATCC BAA-587 / NCTC 13253)).